The sequence spans 56 residues: Large ribosomal subunit protein uL30 (56 aa).

This sequence belongs to the universal ribosomal protein uL30 family. Part of the 50S ribosomal subunit.

The protein is Large ribosomal subunit protein uL30 of Nitratidesulfovibrio vulgaris (strain ATCC 29579 / DSM 644 / CCUG 34227 / NCIMB 8303 / VKM B-1760 / Hildenborough) (Desulfovibrio vulgaris).